Consider the following 391-residue polypeptide: cAMP-dependent protein kinase regulatory subunit (391 aa).

A disordered region spans residues 1-84; that stretch reads MFKSPFGANA…PPNPESYPAQ (84 aa). Positions 1–131 are dimerization and phosphorylation; the sequence is MFKSPFGANA…RLKTAIAGNF (131 aa). Residues 38-55 show a composition bias toward polar residues; the sequence is TVTSPTSPNFGMNAQSMF. At Ser92 the chain carries Phosphoserine. 3',5'-cyclic AMP is bound by residues 132-261, Glu210, Arg219, 264-381, Glu331, and Arg340; these read LFSH…FLRE and LLQT…DIKT.

This sequence belongs to the cAMP-dependent kinase regulatory chain family. Tetramer, composed of 2 regulatory (R) and 2 catalytic (C) subunits. In the presence of cAMP it dissociates into 2 active monomeric C subunits and an R dimer.

In Colletotrichum orbiculare (strain 104-T / ATCC 96160 / CBS 514.97 / LARS 414 / MAFF 240422) (Cucumber anthracnose fungus), this protein is cAMP-dependent protein kinase regulatory subunit (PKAR).